A 236-amino-acid polypeptide reads, in one-letter code: Orotidine 5'-phosphate decarboxylase (236 aa).

Substrate contacts are provided by residues Asp17, Lys39, 66–75 (DLKFHDIPNT), Thr125, Arg186, Gln195, Gly215, and Arg216. The active-site Proton donor is Lys68.

This sequence belongs to the OMP decarboxylase family. Type 1 subfamily. Homodimer.

The enzyme catalyses orotidine 5'-phosphate + H(+) = UMP + CO2. It participates in pyrimidine metabolism; UMP biosynthesis via de novo pathway; UMP from orotate: step 2/2. Its function is as follows. Catalyzes the decarboxylation of orotidine 5'-monophosphate (OMP) to uridine 5'-monophosphate (UMP). The protein is Orotidine 5'-phosphate decarboxylase of Buchnera aphidicola subsp. Acyrthosiphon pisum (strain 5A).